We begin with the raw amino-acid sequence, 382 residues long: 1-deoxy-D-xylulose 5-phosphate reductoisomerase (382 aa).

Positions 10, 11, 12, 13, 38, and 120 each coordinate NADPH. A 1-deoxy-D-xylulose 5-phosphate-binding site is contributed by lysine 121. An NADPH-binding site is contributed by glutamate 122. Position 146 (aspartate 146) interacts with Mn(2+). Residues serine 147, glutamate 148, serine 172, and histidine 195 each contribute to the 1-deoxy-D-xylulose 5-phosphate site. Glutamate 148 is a binding site for Mn(2+). Glycine 201 lines the NADPH pocket. 1-deoxy-D-xylulose 5-phosphate is bound by residues serine 208, asparagine 213, lysine 214, and glutamate 217. A Mn(2+)-binding site is contributed by glutamate 217.

Belongs to the DXR family. Mg(2+) is required as a cofactor. Requires Mn(2+) as cofactor.

The enzyme catalyses 2-C-methyl-D-erythritol 4-phosphate + NADP(+) = 1-deoxy-D-xylulose 5-phosphate + NADPH + H(+). It participates in isoprenoid biosynthesis; isopentenyl diphosphate biosynthesis via DXP pathway; isopentenyl diphosphate from 1-deoxy-D-xylulose 5-phosphate: step 1/6. Functionally, catalyzes the NADPH-dependent rearrangement and reduction of 1-deoxy-D-xylulose-5-phosphate (DXP) to 2-C-methyl-D-erythritol 4-phosphate (MEP). This chain is 1-deoxy-D-xylulose 5-phosphate reductoisomerase, found in Caldanaerobacter subterraneus subsp. tengcongensis (strain DSM 15242 / JCM 11007 / NBRC 100824 / MB4) (Thermoanaerobacter tengcongensis).